The chain runs to 258 residues: 5-oxoprolinase subunit A 2 (258 aa).

It belongs to the LamB/PxpA family. As to quaternary structure, forms a complex composed of PxpA, PxpB and PxpC.

It carries out the reaction 5-oxo-L-proline + ATP + 2 H2O = L-glutamate + ADP + phosphate + H(+). Catalyzes the cleavage of 5-oxoproline to form L-glutamate coupled to the hydrolysis of ATP to ADP and inorganic phosphate. The polypeptide is 5-oxoprolinase subunit A 2 (Pseudomonas putida (strain ATCC 47054 / DSM 6125 / CFBP 8728 / NCIMB 11950 / KT2440)).